Reading from the N-terminus, the 434-residue chain is Chaperone SurA (434 aa).

The N-terminal stretch at 1 to 20 (MKNWRTLILGLVICANTAFA) is a signal peptide. 2 consecutive PpiC domains span residues 171–272 (DTEL…KVND) and 282–382 (VTEV…QLVD).

The protein resides in the periplasm. It catalyses the reaction [protein]-peptidylproline (omega=180) = [protein]-peptidylproline (omega=0). Chaperone involved in the correct folding and assembly of outer membrane proteins. Recognizes specific patterns of aromatic residues and the orientation of their side chains, which are found more frequently in integral outer membrane proteins. May act in both early periplasmic and late outer membrane-associated steps of protein maturation. The sequence is that of Chaperone SurA from Yersinia pestis bv. Antiqua (strain Antiqua).